Here is a 531-residue protein sequence, read N- to C-terminus: Calcium-dependent protein kinase 21 (531 aa).

Over residues 1 to 10 the composition is skewed to basic residues; sequence MGCFSSKHRK. The disordered stretch occupies residues 1-62; the sequence is MGCFSSKHRK…STPSSNPVSV (62 aa). The N-myristoyl glycine moiety is linked to residue Gly2. Polar residues predominate over residues 48 to 60; the sequence is IHQQISTPSSNPV. One can recognise a Protein kinase domain in the interval 80-338; the sequence is YSLGKELGRG…AAQVLEHPWI (259 aa). ATP contacts are provided by residues 86-94 and Lys109; that span reads LGRGQFGIT. Asp204 (proton acceptor) is an active-site residue. Ser244 carries the phosphoserine modification. An autoinhibitory domain region spans residues 343-373; that stretch reads APDKPIDSAVLSRMKQFRAMNKLKKLALKVI. EF-hand domains lie at 380–415, 416–451, 452–487, and 488–522; these read EEIK…LGSR, LSET…RYKL, DRDE…YGMG, and DEAS…GSTQ. Ca(2+) is bound by residues Asp393, Asp395, Ser397, Thr399, Glu404, Asp429, Asp431, Asn433, Thr435, Glu440, Asp465, Asp467, Ser469, His471, Glu476, Asp500, Asp502, Asp504, Arg506, and Glu511.

It belongs to the protein kinase superfamily. Ser/Thr protein kinase family. CDPK subfamily. In terms of assembly, interacts with SLAC1 and ABI1.

Its subcellular location is the cell membrane. It carries out the reaction L-seryl-[protein] + ATP = O-phospho-L-seryl-[protein] + ADP + H(+). The catalysed reaction is L-threonyl-[protein] + ATP = O-phospho-L-threonyl-[protein] + ADP + H(+). Its activity is regulated as follows. Activated by calcium. Autophosphorylation may play an important role in the regulation of the kinase activity. In terms of biological role, may play a role in signal transduction pathways that involve calcium as a second messenger. Mediates the phosphorylation and activation of the S-type anion efflux channel SLAC1. The polypeptide is Calcium-dependent protein kinase 21 (CPK21) (Arabidopsis thaliana (Mouse-ear cress)).